The primary structure comprises 153 residues: Probable inactive ribonuclease-like protein 13 (153 aa).

The N-terminal stretch at 1–22 is a signal peptide; it reads MAPDVAWLLVLPLVFRPTLVTG.

It belongs to the pancreatic ribonuclease family.

Its subcellular location is the secreted. In terms of biological role, does not exhibit any ribonuclease activity. The chain is Probable inactive ribonuclease-like protein 13 (Rnase13) from Mus musculus (Mouse).